Consider the following 1221-residue polypeptide: DNA-directed RNA polymerase subunit beta' (1221 aa).

Residues Cys60, Cys62, Cys75, and Cys78 each coordinate Zn(2+). The Mg(2+) site is built by Asp449, Asp451, and Asp453. Positions 821, 896, 903, and 906 each coordinate Zn(2+).

The protein belongs to the RNA polymerase beta' chain family. In terms of assembly, the RNAP catalytic core consists of 2 alpha, 1 beta, 1 beta' and 1 omega subunit. When a sigma factor is associated with the core the holoenzyme is formed, which can initiate transcription. Mg(2+) serves as cofactor. The cofactor is Zn(2+).

The enzyme catalyses RNA(n) + a ribonucleoside 5'-triphosphate = RNA(n+1) + diphosphate. In terms of biological role, DNA-dependent RNA polymerase catalyzes the transcription of DNA into RNA using the four ribonucleoside triphosphates as substrates. The sequence is that of DNA-directed RNA polymerase subunit beta' from Lactobacillus delbrueckii subsp. bulgaricus (strain ATCC 11842 / DSM 20081 / BCRC 10696 / JCM 1002 / NBRC 13953 / NCIMB 11778 / NCTC 12712 / WDCM 00102 / Lb 14).